Here is a 586-residue protein sequence, read N- to C-terminus: Kelch-like protein 7 (586 aa).

In terms of domain architecture, BTB spans 44–111 (CDVILTVQER…AYTARISVNS (68 aa)). One can recognise a BACK domain in the interval 146–248 (CLGISVLAEC…SKNFLSKTVQ (103 aa)). 6 Kelch repeats span residues 294 to 336 (RIAL…FWDN), 337 to 382 (VVYI…AAEG), 383 to 430 (KIYT…EANG), 431 to 481 (LIYV…FVKD), 483 to 528 (IFAV…AVGS), and 530 to 575 (IYVL…CVVD).

As to quaternary structure, homodimer. Component of the BCR(KLHL7) E3 ubiquitin ligase complex, at least composed of CUL3 and KLHL7 and RBX1.

It is found in the nucleus. Its subcellular location is the cytoplasm. The protein operates within protein modification; protein ubiquitination. Substrate-specific adapter of a BCR (BTB-CUL3-RBX1) E3 ubiquitin ligase complex. The BCR(KLHL7) complex acts by mediating ubiquitination and subsequent degradation of substrate proteins. Probably mediates 'Lys-48'-linked ubiquitination. This chain is Kelch-like protein 7 (Klhl7), found in Mus musculus (Mouse).